The sequence spans 344 residues: 3-dehydroquinate synthase (344 aa).

NAD(+) is bound by residues 60–65 (DGEEYK), 94–98 (GVISD), 118–119 (TT), lysine 131, lysine 140, and 158–161 (FLNT). Zn(2+) is bound by residues glutamate 173, histidine 232, and histidine 249.

This sequence belongs to the sugar phosphate cyclases superfamily. Dehydroquinate synthase family. It depends on Co(2+) as a cofactor. The cofactor is Zn(2+). NAD(+) is required as a cofactor.

It is found in the cytoplasm. The catalysed reaction is 7-phospho-2-dehydro-3-deoxy-D-arabino-heptonate = 3-dehydroquinate + phosphate. It participates in metabolic intermediate biosynthesis; chorismate biosynthesis; chorismate from D-erythrose 4-phosphate and phosphoenolpyruvate: step 2/7. Functionally, catalyzes the conversion of 3-deoxy-D-arabino-heptulosonate 7-phosphate (DAHP) to dehydroquinate (DHQ). This Campylobacter hominis (strain ATCC BAA-381 / DSM 21671 / CCUG 45161 / LMG 19568 / NCTC 13146 / CH001A) protein is 3-dehydroquinate synthase.